The sequence spans 196 residues: Imidazoleglycerol-phosphate dehydratase (196 aa).

The protein belongs to the imidazoleglycerol-phosphate dehydratase family.

The protein localises to the cytoplasm. The enzyme catalyses D-erythro-1-(imidazol-4-yl)glycerol 3-phosphate = 3-(imidazol-4-yl)-2-oxopropyl phosphate + H2O. The protein operates within amino-acid biosynthesis; L-histidine biosynthesis; L-histidine from 5-phospho-alpha-D-ribose 1-diphosphate: step 6/9. The protein is Imidazoleglycerol-phosphate dehydratase of Phenylobacterium zucineum (strain HLK1).